The sequence spans 139 residues: Actin-depolymerizing factor 3 (139 aa).

The region spanning 7–139 is the ADF-H domain; it reads GVAVNDECML…SLDEIKDRAR (133 aa).

The protein belongs to the actin-binding proteins ADF family. Expressed in all tissues except pollen.

The protein resides in the cytoplasm. In terms of biological role, actin-depolymerizing protein. Severs actin filaments (F-actin) and binds to actin monomers. The chain is Actin-depolymerizing factor 3 (ADF3) from Zea mays (Maize).